The chain runs to 464 residues: MSVIKEYRTVSEVVGPLMIVDQVAGVHFNELVEIQLHDGSKRQGQVLEVQEDKAMVQLFEGSSGINLEKAKVRFTGRPLELPVSEDMVGRIFNGMGKPIDGGPAILPEKYLDIDGQAINPVARDYPDEFIQTGISAIDHLNTLVRGQKLPVFSGSGLPHKELAAQIARQATVLNSDENFAVVFVAMGITFEEAEFFMNDLRETGAIDRSVLFINLANDPAIERIATPRIALTAAEYLAYEKDMHVLVIMTDMTNYCEALREVSAARREVPGRRGYPGYLYTNLSTLYERAGRLVGKKGSVTQIPILSMPEDDITHPIPDLTGYITEGQIILSRELYNSGYRPPINVLPSLSRLKDKGSGEGKTRGDHAATMNQLFAAYAQGKQAKELAVVLGESALSETDKLYVRFTDRFEQEYINQGFQTNRTIEESLDLGWELLSILPRTELKRIKDDMIDQYLPQTKEEER.

Belongs to the ATPase alpha/beta chains family.

In terms of biological role, produces ATP from ADP in the presence of a proton gradient across the membrane. The V-type beta chain is a regulatory subunit. This is V-type ATP synthase beta chain from Streptococcus sanguinis (strain SK36).